Reading from the N-terminus, the 444-residue chain is Exopolygalacturonase clone GBGA483 (444 aa).

An N-terminal signal peptide occupies residues 1–23; that stretch reads MVGSHKASGVLLVLLVVMATTIA. PbH1 repeat units follow at residues 220–246, 247–268, 270–290, 300–321, and 330–351; these read CKNI…HIGR, SNGV…SIGD, TENL…SIGS, VKGV…RIKT, and ASNI…LIDQ. N-linked (GlcNAc...) asparagine glycosylation is present at N222. D261 functions as the Proton donor in the catalytic mechanism. A disulfide bond links C263 and C280. The active site involves H284. N342 carries N-linked (GlcNAc...) asparagine glycosylation. 2 cysteine pairs are disulfide-bonded: C391–C397 and C420–C436.

Belongs to the glycosyl hydrolase 28 family.

The protein localises to the secreted. It localises to the cell wall. It catalyses the reaction [(1-&gt;4)-alpha-D-galacturonosyl](n) + H2O = alpha-D-galacturonate + [(1-&gt;4)-alpha-D-galacturonosyl](n-1). In terms of biological role, may function in depolymerizing pectin during pollen development, germination, and tube growth. Acts as an exo-polygalacturonase. The protein is Exopolygalacturonase clone GBGA483 of Arabidopsis thaliana (Mouse-ear cress).